The following is a 354-amino-acid chain: Ornithine transcarbamylase, mitochondrial (354 aa).

A mitochondrion-targeting transit peptide spans M1 to Q32. Residue K70 is modified to N6-acetyllysine; alternate. At K70 the chain carries N6-succinyllysine; alternate. K80 is modified (N6-succinyllysine). K88 carries the post-translational modification N6-acetyllysine; alternate. K88 is subject to N6-succinyllysine; alternate. Residue S90–R94 participates in carbamoyl phosphate binding. The residue at position 133 (S133) is a Phosphoserine. R141 lines the carbamoyl phosphate pocket. R141 lines the L-ornithine pocket. K144 carries the post-translational modification N6-acetyllysine; alternate. Position 144 is an N6-succinyllysine; alternate (K144). H168 contributes to the carbamoyl phosphate binding site. N199 provides a ligand contact to L-ornithine. Residues K221, K231, and K238 each carry the N6-acetyllysine; alternate modification. N6-succinyllysine; alternate is present on residues K221, K231, and K238. Residue K243 is modified to N6-acetyllysine. D263–S267 contacts L-ornithine. N6-succinyllysine occurs at positions 274 and 289. K292 carries the N6-acetyllysine; alternate modification. K292 is subject to N6-succinyllysine; alternate. An L-ornithine-binding site is contributed by H302 to P305. The active site involves C303. An N6-acetyllysine; alternate modification is found at K307. K307 carries the post-translational modification N6-succinyllysine; alternate. R330 serves as a coordination point for carbamoyl phosphate. R330 contacts L-ornithine.

Belongs to the aspartate/ornithine carbamoyltransferase superfamily. OTCase family. In terms of assembly, homotrimer. Acetylation at Lys-88 negatively regulates ornithine carbamoyltransferase activity in response to nutrient signals.

Its subcellular location is the mitochondrion matrix. The enzyme catalyses carbamoyl phosphate + L-ornithine = L-citrulline + phosphate + H(+). It functions in the pathway nitrogen metabolism; urea cycle; L-citrulline from L-ornithine and carbamoyl phosphate: step 1/1. Negatively regulated by lysine acetylation. Catalyzes the second step of the urea cycle, the condensation of carbamoyl phosphate with L-ornithine to form L-citrulline. The urea cycle ensures the detoxification of ammonia by converting it to urea for excretion. This Mus musculus (Mouse) protein is Ornithine transcarbamylase, mitochondrial.